A 165-amino-acid polypeptide reads, in one-letter code: Phosphopantetheine adenylyltransferase (165 aa).

Residue serine 10 participates in substrate binding. ATP is bound by residues 10–11 and histidine 18; that span reads SF. Substrate-binding residues include lysine 42, threonine 79, and arginine 93. ATP contacts are provided by residues 94 to 96, glutamate 104, and 129 to 135; these read GLR and VRPITAT.

It belongs to the bacterial CoaD family. As to quaternary structure, homohexamer. Requires Mg(2+) as cofactor.

It is found in the cytoplasm. It catalyses the reaction (R)-4'-phosphopantetheine + ATP + H(+) = 3'-dephospho-CoA + diphosphate. Its pathway is cofactor biosynthesis; coenzyme A biosynthesis; CoA from (R)-pantothenate: step 4/5. Its function is as follows. Reversibly transfers an adenylyl group from ATP to 4'-phosphopantetheine, yielding dephospho-CoA (dPCoA) and pyrophosphate. This chain is Phosphopantetheine adenylyltransferase, found in Rhodopseudomonas palustris (strain BisA53).